Reading from the N-terminus, the 190-residue chain is GTP cyclohydrolase 1 (190 aa).

Positions 80, 83, and 151 each coordinate Zn(2+).

It belongs to the GTP cyclohydrolase I family. In terms of assembly, toroid-shaped homodecamer, composed of two pentamers of five dimers.

The catalysed reaction is GTP + H2O = 7,8-dihydroneopterin 3'-triphosphate + formate + H(+). The protein operates within cofactor biosynthesis; 7,8-dihydroneopterin triphosphate biosynthesis; 7,8-dihydroneopterin triphosphate from GTP: step 1/1. In Rickettsia felis (strain ATCC VR-1525 / URRWXCal2) (Rickettsia azadi), this protein is GTP cyclohydrolase 1.